Here is a 546-residue protein sequence, read N- to C-terminus: Chaperonin GroEL 2 (546 aa).

Residues 29–32, 86–90, glycine 418, 482–484, and aspartate 498 each bind ATP; these read TLGP, DGTTT, and NAA.

The protein belongs to the chaperonin (HSP60) family. As to quaternary structure, forms a cylinder of 14 subunits composed of two heptameric rings stacked back-to-back. Interacts with the co-chaperonin GroES.

Its subcellular location is the cytoplasm. It carries out the reaction ATP + H2O + a folded polypeptide = ADP + phosphate + an unfolded polypeptide.. Together with its co-chaperonin GroES, plays an essential role in assisting protein folding. The GroEL-GroES system forms a nano-cage that allows encapsulation of the non-native substrate proteins and provides a physical environment optimized to promote and accelerate protein folding. The polypeptide is Chaperonin GroEL 2 (Corynebacterium diphtheriae (strain ATCC 700971 / NCTC 13129 / Biotype gravis)).